Here is a 520-residue protein sequence, read N- to C-terminus: DNA-(apurinic or apyrimidinic site) endonuclease 2 (520 aa).

A Mg(2+)-binding site is contributed by E59. Residue Y181 is part of the active site. D222, N224, and D353 together coordinate Mg(2+). D222 acts as the Proton donor/acceptor in catalysis. Zn(2+) contacts are provided by C476, H478, C500, and C514. The GRF-type zinc-finger motif lies at 476–520 (CRHGEESMLKTSKTSANPGRKFWICKRSRGDSNNTESSCGFFQWV).

It belongs to the DNA repair enzymes AP/ExoA family. The cofactor is Mg(2+). Mn(2+) is required as a cofactor.

It is found in the nucleus. The catalysed reaction is Exonucleolytic cleavage in the 3'- to 5'-direction to yield nucleoside 5'-phosphates.. Its function is as follows. DNA repair enzyme that cleaves apurinic/apyrimidinic (AP) sites and removes 3'-blocking groups present at single strand breaks of damaged DNA. This Saccharomyces cerevisiae (strain ATCC 204508 / S288c) (Baker's yeast) protein is DNA-(apurinic or apyrimidinic site) endonuclease 2 (APN2).